The sequence spans 696 residues: Tensin-4 (696 aa).

An N-terminal signal peptide occupies residues 1–14 (MSSSLLAGGHMVSL). Disordered regions lie at residues 157–246 (LDGP…RAPQ), 271–344 (SLPH…CPAS), and 356–416 (LING…KDMQ). The segment covering 192–203 (SSSNESLIFSGN) has biased composition (polar residues). Phosphoserine is present on serine 230. Positions 271–304 (SLPHSSLSSYPSSSRSLGSPASSSSSLHSLDRGS) are enriched in low complexity. 2 stretches are compositionally biased toward polar residues: residues 326 to 344 (QAVQSTPVAKEQASSCPAS) and 372 to 397 (PGHQDSVQSRVTSPSHLCQAIKSPSK). The SH2 domain maps to 429-536 (WFKPSITREQ…ALPCKLTIPQ (108 aa)). The PTB domain maps to 563–690 (CHTLYLSSVS…QVISLVTALL (128 aa)).

Belongs to the PTEN phosphatase protein family. As to quaternary structure, interacts (via SH2 domain) with Rho GTPase-activating protein DLC1 (via C-terminus); the interaction is independent of DLC1 tyrosine phosphorylation. Interacts with integrin ITGB1; the interaction displaces tensin TNS3 from the ITGB1 cytoplasmic tail and promotes ITGB1 stability. Interacts (via SH2 domain) with E3 ubiquitin-protein ligase CBL (phosphorylated on 'Tyr-780'); the interaction is enhanced in the presence of EGF and reduces interaction of CBL with EGFR. Interacts (via SH2 domain) with receptor tyrosine kinase MET (when phosphorylated); the interaction increases MET protein stability.

The protein resides in the cell junction. It localises to the focal adhesion. Its subcellular location is the cytoplasm. The protein localises to the cytoskeleton. Functionally, promotes EGF-induced cell migration by displacing tensin TNS3 from the cytoplasmic tail of integrin ITGB1 which results in dissociation of TNS3 from focal adhesions, disassembly of actin stress fibers and initiation of cell migration. Suppresses ligand-induced degradation of EGFR by reducing EGFR ubiquitination in the presence of EGF. Increases MET protein stability by inhibiting MET endocytosis and subsequent lysosomal degradation which leads to increased cell survival, proliferation and migration. This chain is Tensin-4 (Tns4), found in Mus musculus (Mouse).